A 1157-amino-acid chain; its full sequence is DNA-directed RNA polymerase subunit beta (1157 aa).

This sequence belongs to the RNA polymerase beta chain family. In terms of assembly, the RNAP catalytic core consists of 2 alpha, 1 beta, 1 beta' and 1 omega subunit. When a sigma factor is associated with the core the holoenzyme is formed, which can initiate transcription.

It catalyses the reaction RNA(n) + a ribonucleoside 5'-triphosphate = RNA(n+1) + diphosphate. In terms of biological role, DNA-dependent RNA polymerase catalyzes the transcription of DNA into RNA using the four ribonucleoside triphosphates as substrates. The protein is DNA-directed RNA polymerase subunit beta of Tropheryma whipplei (Whipple's bacillus).